A 292-amino-acid chain; its full sequence is 4-hydroxy-tetrahydrodipicolinate synthase (292 aa).

Position 45 (T45) interacts with pyruvate. Y133 acts as the Proton donor/acceptor in catalysis. K161 (schiff-base intermediate with substrate) is an active-site residue. Pyruvate is bound at residue I203.

The protein belongs to the DapA family. As to quaternary structure, homotetramer; dimer of dimers.

The protein resides in the cytoplasm. The catalysed reaction is L-aspartate 4-semialdehyde + pyruvate = (2S,4S)-4-hydroxy-2,3,4,5-tetrahydrodipicolinate + H2O + H(+). It participates in amino-acid biosynthesis; L-lysine biosynthesis via DAP pathway; (S)-tetrahydrodipicolinate from L-aspartate: step 3/4. Its function is as follows. Catalyzes the condensation of (S)-aspartate-beta-semialdehyde [(S)-ASA] and pyruvate to 4-hydroxy-tetrahydrodipicolinate (HTPA). This is 4-hydroxy-tetrahydrodipicolinate synthase from Erwinia tasmaniensis (strain DSM 17950 / CFBP 7177 / CIP 109463 / NCPPB 4357 / Et1/99).